The following is a 639-amino-acid chain: 1-deoxy-D-xylulose-5-phosphate synthase (639 aa).

Thiamine diphosphate is bound by residues His76 and 117–119 (AHS). Asp148 contacts Mg(2+). Thiamine diphosphate contacts are provided by residues 149–150 (GS), Asn181, Tyr288, and Glu370. Asn181 serves as a coordination point for Mg(2+).

Belongs to the transketolase family. DXPS subfamily. Homodimer. It depends on Mg(2+) as a cofactor. Thiamine diphosphate is required as a cofactor.

It catalyses the reaction D-glyceraldehyde 3-phosphate + pyruvate + H(+) = 1-deoxy-D-xylulose 5-phosphate + CO2. The protein operates within metabolic intermediate biosynthesis; 1-deoxy-D-xylulose 5-phosphate biosynthesis; 1-deoxy-D-xylulose 5-phosphate from D-glyceraldehyde 3-phosphate and pyruvate: step 1/1. In terms of biological role, catalyzes the acyloin condensation reaction between C atoms 2 and 3 of pyruvate and glyceraldehyde 3-phosphate to yield 1-deoxy-D-xylulose-5-phosphate (DXP). The chain is 1-deoxy-D-xylulose-5-phosphate synthase from Leptothrix cholodnii (strain ATCC 51168 / LMG 8142 / SP-6) (Leptothrix discophora (strain SP-6)).